The primary structure comprises 77 residues: NADH-ubiquinone oxidoreductase chain 4L (77 aa).

2 consecutive transmembrane segments (helical) span residues 15 to 37 and 44 to 64; these read WQRLIFILISLEFMMLSLFLKFS and MFFYFMCFSVISSILGMVVMV.

Belongs to the complex I subunit 4L family.

The protein localises to the mitochondrion membrane. It catalyses the reaction a ubiquinone + NADH + 5 H(+)(in) = a ubiquinol + NAD(+) + 4 H(+)(out). Core subunit of the mitochondrial membrane respiratory chain NADH dehydrogenase (Complex I) that is believed to belong to the minimal assembly required for catalysis. Complex I functions in the transfer of electrons from NADH to the respiratory chain. The immediate electron acceptor for the enzyme is believed to be ubiquinone. This Caenorhabditis elegans protein is NADH-ubiquinone oxidoreductase chain 4L.